The sequence spans 213 residues: Eukaryotic translation initiation factor isoform 4E (213 aa).

The disordered stretch occupies residues 1 to 37; it reads MATEVAAAVPPPQLDAEENSGLEAAAAEAKIQPSSGP. Residues 56–61, K88, and 106–107 each bind mRNA; these read QGAAWG and WE. C111 and C150 are disulfide-bonded. Residues 157–162 and 202–205 contribute to the mRNA site; these read RQRQDK and KRER.

This sequence belongs to the eukaryotic initiation factor 4E family. EIF4F is a multi-subunit complex, the composition of which varies with external and internal environmental conditions. It is composed of at least EIF4A, EIF4E and EIF4G. EIF4E is also known to interact with other partners. In higher plants two isoforms of EIF4F have been identified, named isoform EIF4F and isoform EIF(iso)4F. Isoform EIF4F has subunits p220 and p26, whereas isoform EIF(iso)4F has subunits p82 and p28. In terms of assembly, (Microbial infection) Interacts with potyvirus viral genome-linked protein (VPg) of plum pox virus (PPV) strain D both in nucleus and cytoplasm; this interaction is possible in susceptible hosts but is impaired in resistant plants. Post-translationally, according to the redox status, the Cys-111-Cys-150 disulfide bridge may have a role in regulating protein function by affecting its ability to bind capped mRNA. As to expression, mostly expressed in leaves, flower buds, leaf buds and anthers, to a lower extent in roots, stems and green immature fruit, and, at low levels, in petals.

It is found in the cytoplasm. It localises to the nucleus. In terms of biological role, component of the protein complex eIF4F, which is involved in the recognition of the mRNA cap, ATP-dependent unwinding of 5'-terminal secondary structure and recruitment of mRNA to the ribosome. Recognizes and binds the 7-methylguanosine-containing mRNA cap during an early step in the initiation of protein synthesis and facilitates ribosome binding by inducing the unwinding of the mRNAs secondary structures. Key component of recessive resistance to potyviruses such as the plum pox virus (PPV) strain D. (Microbial infection) Susceptibility host factor required for viral infection by recruiting viral RNAs to the host ribosomal complex via an interaction with viral genome-linked protein (VPg). The protein is Eukaryotic translation initiation factor isoform 4E of Prunus domestica (Garden plum).